Reading from the N-terminus, the 432-residue chain is MIDSLDLVIDSIFAREVLDSRGNPTVEAEVLLEGGAKGRAIVPSGASTGAYEAHELRDGGTRYMGKGVLRVVEHIEDRIAPSLCGLSASDQVNVDQIMRELDGTENKENLGANAILAVSIATARSAANAFGMPLYRYLGNPMSSLLPVPLMNVINGGAHAANNLDFQEFMLVPHGAESFREALRMGAEVFHTLKKLLSDKGLSTAVGDEGGFAPDLENNNAAGDLLVQAIEKAGFRPGEEISLALDVASTEFFKNGLYHFGEGKFSSEKMVEELKKLVNLYPIISIEDGLSEDDWSGWELLTKELGNKVQLVGDDLFVTNTKRLRQGIDRSIANSILIKVNQIGTLTETLEAIDLSHRMGYTSIISHRSGETEDTTIADLAVATRAGQIKTGSLSRSERVAKYNQLLRIEDQLGAQAVYAGSVGLGPRGLSK.

(2R)-2-phosphoglycerate is bound at residue Gln-167. Glu-209 (proton donor) is an active-site residue. 3 residues coordinate Mg(2+): Asp-246, Glu-287, and Asp-314. The (2R)-2-phosphoglycerate site is built by Lys-339, Arg-368, Ser-369, and Lys-390. The active-site Proton acceptor is Lys-339.

The protein belongs to the enolase family. It depends on Mg(2+) as a cofactor.

The protein localises to the cytoplasm. The protein resides in the secreted. It localises to the cell surface. It carries out the reaction (2R)-2-phosphoglycerate = phosphoenolpyruvate + H2O. The protein operates within carbohydrate degradation; glycolysis; pyruvate from D-glyceraldehyde 3-phosphate: step 4/5. Functionally, catalyzes the reversible conversion of 2-phosphoglycerate (2-PG) into phosphoenolpyruvate (PEP). It is essential for the degradation of carbohydrates via glycolysis. This chain is Enolase, found in Prochlorococcus marinus (strain SARG / CCMP1375 / SS120).